The primary structure comprises 324 residues: Quinolinate synthase (324 aa).

2 residues coordinate iminosuccinate: H39 and S56. C101 provides a ligand contact to [4Fe-4S] cluster. Iminosuccinate is bound by residues Y127–N129 and S144. C187 serves as a coordination point for [4Fe-4S] cluster. Residues H213–E215 and T230 contribute to the iminosuccinate site. C280 provides a ligand contact to [4Fe-4S] cluster.

Belongs to the quinolinate synthase family. Type 2 subfamily. The cofactor is [4Fe-4S] cluster.

The protein localises to the cytoplasm. The catalysed reaction is iminosuccinate + dihydroxyacetone phosphate = quinolinate + phosphate + 2 H2O + H(+). It participates in cofactor biosynthesis; NAD(+) biosynthesis; quinolinate from iminoaspartate: step 1/1. Catalyzes the condensation of iminoaspartate with dihydroxyacetone phosphate to form quinolinate. The chain is Quinolinate synthase from Trichormus variabilis (strain ATCC 29413 / PCC 7937) (Anabaena variabilis).